Consider the following 487-residue polypeptide: uncharacterized protein (487 aa).

Disordered regions lie at residues 35–153, 237–345, and 358–395; these read VSRK…SGDQ, NTTK…AKAL, and QKRKREEIVRKKEERRHAPVSEKKEVPTTVSTNTSSAA. Over residues 54 to 96 the composition is skewed to acidic residues; that stretch reads FDQEDILDTVPEQTDENEDEAGDDELESEKEELDYDEEEDDED. Residues 97 to 132 show a composition bias toward basic and acidic residues; sequence RRERTSRYTSEKKGSRKDSVEGDENKKENGQDETKR. Positions 241 to 253 are enriched in basic residues; the sequence is SKSRGRDTRKRRS. Residues 254-264 show a composition bias toward low complexity; the sequence is SSYSSTSSSSD. Composition is skewed to basic and acidic residues over residues 273–338 and 358–383; these read SRSD…KHSA and QKRKREEIVRKKEERRHAPVSEKKEV. Residues 385-395 show a composition bias toward low complexity; it reads TTVSTNTSSAA.

This is an uncharacterized protein from Caenorhabditis elegans.